The following is a 256-amino-acid chain: tRNA (guanine-N(1)-)-methyltransferase (256 aa).

Residues Gly-113 and 132-137 contribute to the S-adenosyl-L-methionine site; that span reads VGDYVL.

The protein belongs to the RNA methyltransferase TrmD family. Homodimer.

The protein resides in the cytoplasm. The catalysed reaction is guanosine(37) in tRNA + S-adenosyl-L-methionine = N(1)-methylguanosine(37) in tRNA + S-adenosyl-L-homocysteine + H(+). Functionally, specifically methylates guanosine-37 in various tRNAs. This Coprothermobacter proteolyticus (strain ATCC 35245 / DSM 5265 / OCM 4 / BT) protein is tRNA (guanine-N(1)-)-methyltransferase.